Here is a 348-residue protein sequence, read N- to C-terminus: Dihydroorotase (348 aa).

Residues histidine 13 and histidine 15 each coordinate Zn(2+). Substrate contacts are provided by residues 15-17 and asparagine 41; that span reads HLR. Lysine 99, histidine 136, and histidine 174 together coordinate Zn(2+). Lysine 99 bears the N6-carboxylysine mark. Histidine 136 contributes to the substrate binding site. A substrate-binding site is contributed by leucine 219. Aspartate 247 contributes to the Zn(2+) binding site. Residue aspartate 247 is part of the active site. Histidine 251 and alanine 263 together coordinate substrate.

Belongs to the metallo-dependent hydrolases superfamily. DHOase family. Class II DHOase subfamily. Homodimer. Zn(2+) is required as a cofactor.

It catalyses the reaction (S)-dihydroorotate + H2O = N-carbamoyl-L-aspartate + H(+). It functions in the pathway pyrimidine metabolism; UMP biosynthesis via de novo pathway; (S)-dihydroorotate from bicarbonate: step 3/3. Functionally, catalyzes the reversible cyclization of carbamoyl aspartate to dihydroorotate. The chain is Dihydroorotase from Rhizobium etli (strain ATCC 51251 / DSM 11541 / JCM 21823 / NBRC 15573 / CFN 42).